The chain runs to 266 residues: GTP cyclohydrolase III (266 aa).

The protein belongs to the archaeal-type GTP cyclohydrolase family.

The enzyme catalyses GTP + 3 H2O = 2-amino-5-formylamino-6-(5-phospho-D-ribosylamino)pyrimidin-4(3H)-one + 2 phosphate + 2 H(+). Catalyzes the formation of 2-amino-5-formylamino-6-ribofuranosylamino-4(3H)-pyrimidinone ribonucleotide monophosphate and inorganic phosphate from GTP. Also has an independent pyrophosphate phosphohydrolase activity. The polypeptide is GTP cyclohydrolase III (Methanococcus maripaludis (strain C5 / ATCC BAA-1333)).